The following is a 109-amino-acid chain: Polyprenyl transferase subC (109 aa).

2 consecutive transmembrane segments (helical) span residues 39–59 (LFCV…NDWI) and 84–104 (QAFV…HVML).

This sequence belongs to the UbiA prenyltransferase family. The cofactor is Mg(2+).

It is found in the membrane. Its pathway is secondary metabolite biosynthesis; terpenoid biosynthesis. Its function is as follows. Polyprenyl transferase; part of the gene cluster that mediates the biosynthesis of the immunosuppressants subglutinols, meroterpenoids consisting of an alpha-pyrone (4-hydroxy-5,6-dimethyl-2-pyrone) moiety attached to a decalin core fused to a five-membered cyclic ether carrying a prenylside chain. The first step of the pathway is the synthesis of the alpha-pyrone moiety by the polyketide synthase subA via condensation of one acetyl-CoA starter unit with 3 malonyl-CoA units and 2 methylations. The alpha-pyrone is then combined with geranylgeranyl pyrophosphate (GGPP) formed by the GGPP synthase subD through the action of the prenyltransferase subC to yield a linear alpha-pyrone diterpenoid. Subsequent steps in the subglutinol biosynthetic pathway involve the decalin core formation, which is thought to be initiated by the epoxidation of the C10-C11 olefin by the FAD-dependent oxidoreductase subE. The following cyclization cascade would be catalyzed by the terpene cyclase subB. Lastly, the FAD-dependent dehydrogenase subF probably catalyzes the five-membered cyclic ether formation to complete the formation of subglutinol A. Subsequent redox reactions appear to give rise to subglutinol C and D, however, it remains unclear which enzymes are responsible for these transformations. SubD may have secondary function in the conversion of the identified subglutinols to subglutinol analog 45, which seems to be the major product of the cluster. In Metarhizium robertsii (strain ARSEF 23 / ATCC MYA-3075) (Metarhizium anisopliae (strain ARSEF 23)), this protein is Polyprenyl transferase subC.